A 251-amino-acid chain; its full sequence is Large ribosomal subunit protein uL3 (251 aa).

Gln151 is subject to N5-methylglutamine. The interval 221 to 251 (GLKQAANSNDSAAADTPAEVAAVEATEGQEG) is disordered. Positions 225–251 (AANSNDSAAADTPAEVAAVEATEGQEG) are enriched in low complexity.

It belongs to the universal ribosomal protein uL3 family. As to quaternary structure, part of the 50S ribosomal subunit. Forms a cluster with proteins L14 and L19. Post-translationally, methylated by PrmB.

Functionally, one of the primary rRNA binding proteins, it binds directly near the 3'-end of the 23S rRNA, where it nucleates assembly of the 50S subunit. The chain is Large ribosomal subunit protein uL3 from Novosphingobium aromaticivorans (strain ATCC 700278 / DSM 12444 / CCUG 56034 / CIP 105152 / NBRC 16084 / F199).